We begin with the raw amino-acid sequence, 274 residues long: Large ribosomal subunit protein uL2 (274 aa).

2 disordered regions span residues K21–K59 and V223–G274. Positions S32–G42 are enriched in low complexity. The span at N45–K59 shows a compositional bias: basic residues. Over residues K263–G274 the composition is skewed to basic and acidic residues.

It belongs to the universal ribosomal protein uL2 family. Part of the 50S ribosomal subunit. Forms a bridge to the 30S subunit in the 70S ribosome.

Functionally, one of the primary rRNA binding proteins. Required for association of the 30S and 50S subunits to form the 70S ribosome, for tRNA binding and peptide bond formation. It has been suggested to have peptidyltransferase activity; this is somewhat controversial. Makes several contacts with the 16S rRNA in the 70S ribosome. This is Large ribosomal subunit protein uL2 from Wolbachia sp. subsp. Drosophila simulans (strain wRi).